The sequence spans 636 residues: Threonine--tRNA ligase (636 aa).

The 61-residue stretch at 1–61 folds into the TGS domain; it reads MINITLPDGK…ETDASVVFIT (61 aa). The tract at residues 238–528 is catalytic; the sequence is DHRKLGTALD…LIEHYAGKFP (291 aa). Zn(2+) is bound by residues cysteine 329, histidine 380, and histidine 505.

This sequence belongs to the class-II aminoacyl-tRNA synthetase family. Homodimer. Requires Zn(2+) as cofactor.

It localises to the cytoplasm. It catalyses the reaction tRNA(Thr) + L-threonine + ATP = L-threonyl-tRNA(Thr) + AMP + diphosphate + H(+). Functionally, catalyzes the attachment of threonine to tRNA(Thr) in a two-step reaction: L-threonine is first activated by ATP to form Thr-AMP and then transferred to the acceptor end of tRNA(Thr). Also edits incorrectly charged L-seryl-tRNA(Thr). The polypeptide is Threonine--tRNA ligase (Desulfatibacillum aliphaticivorans).